The primary structure comprises 268 residues: Tryptophan synthase alpha chain (268 aa).

Catalysis depends on proton acceptor residues Glu-49 and Asp-60.

It belongs to the TrpA family. As to quaternary structure, tetramer of two alpha and two beta chains.

The catalysed reaction is (1S,2R)-1-C-(indol-3-yl)glycerol 3-phosphate + L-serine = D-glyceraldehyde 3-phosphate + L-tryptophan + H2O. The protein operates within amino-acid biosynthesis; L-tryptophan biosynthesis; L-tryptophan from chorismate: step 5/5. The alpha subunit is responsible for the aldol cleavage of indoleglycerol phosphate to indole and glyceraldehyde 3-phosphate. The protein is Tryptophan synthase alpha chain of Aeromonas hydrophila subsp. hydrophila (strain ATCC 7966 / DSM 30187 / BCRC 13018 / CCUG 14551 / JCM 1027 / KCTC 2358 / NCIMB 9240 / NCTC 8049).